We begin with the raw amino-acid sequence, 354 residues long: DNA polymerase IV (354 aa).

The UmuC domain maps to 6 to 187 (IIHIDCDCFY…LPVTKLHGVG (182 aa)). Asp10 and Asp105 together coordinate Mg(2+). Glu106 is an active-site residue.

The protein belongs to the DNA polymerase type-Y family. As to quaternary structure, monomer. The cofactor is Mg(2+).

It localises to the cytoplasm. The catalysed reaction is DNA(n) + a 2'-deoxyribonucleoside 5'-triphosphate = DNA(n+1) + diphosphate. Poorly processive, error-prone DNA polymerase involved in untargeted mutagenesis. Copies undamaged DNA at stalled replication forks, which arise in vivo from mismatched or misaligned primer ends. These misaligned primers can be extended by PolIV. Exhibits no 3'-5' exonuclease (proofreading) activity. May be involved in translesional synthesis, in conjunction with the beta clamp from PolIII. In Pseudomonas syringae pv. syringae (strain B728a), this protein is DNA polymerase IV.